The following is a 141-amino-acid chain: MAKKVIGEIKLQIAATKANPSPPVGPALGQKGVNIMEFCKAFNEKTKDMVGFNIPVVITVYADKSFTFITKQPPATDLIKKAAGITKGTDNPLKNKVGKLTKAQVLEIVEKKLVDLNTNDKEQAAKIIAGSARSMGVEVVD.

This sequence belongs to the universal ribosomal protein uL11 family. Part of the ribosomal stalk of the 50S ribosomal subunit. Interacts with L10 and the large rRNA to form the base of the stalk. L10 forms an elongated spine to which L12 dimers bind in a sequential fashion forming a multimeric L10(L12)X complex. One or more lysine residues are methylated.

Functionally, forms part of the ribosomal stalk which helps the ribosome interact with GTP-bound translation factors. This is Large ribosomal subunit protein uL11 from Campylobacter concisus (strain 13826).